Reading from the N-terminus, the 465-residue chain is MTPVRMQHSLAGQTYAVPFIQPDLRREEAVQQMADALQYLQKVSGDIFSRISQQVEQSRSQVQAIGEKVSLAQAKIEKIKGSKKAIKVFSSAKYPAPGRLQEYGSIFTGAQDPGLQRRPRHRIQSKHRPLDERALQEKLKDFPVCVSTKPEPEDDAEEGLGGLPSNISSVSSLLLFNTTENLYKKYVFLDPLAGAVTKTHVMLGAETEEKLFDAPLSISKREQLEQQVPENYFYVPDLGQVPEIHVPSYLPDLPGIANDLMYSADLGPGIAPSAPGTIPELPTFHTEVAEPLKVDLQDGVLTPPPPPPPPPPAPEVLASAPPLPPSTAAPVGQGARQDDSSSSASPSVQGAPREVVDPSGGWATLLESIRQAGGIGKAKLRSMKERKLEKQQQKEQEQVRATSQGGHLMSDLFNKLVMRRKGISGKGPGAGEGPGGAFVRVSDSIPPLPPPQQPQAEEDEDDWES.

A required for WASH complex assembly region spans residues 1-54 (MTPVRMQHSLAGQTYAVPFIQPDLRREEAVQQMADALQYLQKVSGDIFSRISQQ). Positions 1 to 167 (MTPVRMQHSL…EGLGGLPSNI (167 aa)) are WHD1. A Glycyl lysine isopeptide (Lys-Gly) (interchain with G-Cter in ubiquitin) cross-link involves residue K220. Disordered stretches follow at residues 297 to 359 (QDGV…VDPS), 376 to 407 (GKAKLRSMKERKLEKQQQKEQEQVRATSQGGH), and 423 to 465 (ISGK…DWES). Residues 302-314 (TPPPPPPPPPPAP) are compositionally biased toward pro residues. The interval 349-465 (QGAPREVVDP…AEEDEDDWES (117 aa)) is VCA. The WH2 domain maps to 361 to 383 (GWATLLESIRQAGGIGKAKLRSM). Positions 382 to 398 (SMKERKLEKQQQKEQEQ) are enriched in basic and acidic residues. Gly residues predominate over residues 424–436 (SGKGPGAGEGPGG). Acidic residues predominate over residues 456–465 (AEEDEDDWES).

This sequence belongs to the WASH1 family. In terms of assembly, component of the WASH core complex also described as WASH regulatory complex (SHRC) composed of WASH (WASHC1, WASH2P or WASH3P), WASHC2 (WASHC2A or WASHC2C), WASHC3, WASHC4 and WASHC5. The WASH core complex associates via WASHC2 with the F-actin-capping protein dimer (formed by CAPZA1, CAPZA2 or CAPZA3 and CAPZB) in a transient or substoichiometric manner which was initially described as WASH complex. Interacts (via WHD1 region) with WASHC2C; the interaction is direct. Interacts with VPS35; mediates the association with the retromer CSC complex. Interacts with FKBP15. Interacts with alpha-tubulin. Interacts with BECN1; this interaction can be competed out by AMBRA1 binding. Interacts with BLOC1S2; may associate with the BLOC-1 complex. Interacts with tubulin gamma chain (TUBG1 or TUBG2). Interacts with EXOC1, EXOC4, EXOC8; in MMP14-positive endosomes in breast tumor cells; indicative for an association with the exocyst complex. Interacts with TBC1D23. In terms of processing, ubiquitinated at Lys-220 via 'Lys-63'-linked ubiquitin chains by the TRIM27:MAGEL2 E3 ubiquitin ligase complex, leading to promote endosomal F-actin assembly.

The protein resides in the early endosome membrane. It is found in the recycling endosome membrane. It localises to the late endosome. Its subcellular location is the cytoplasmic vesicle. The protein localises to the autophagosome. The protein resides in the cytoplasm. It is found in the cytoskeleton. It localises to the microtubule organizing center. Its subcellular location is the centrosome. The protein localises to the centriole. Its function is as follows. Acts as a component of the WASH core complex that functions as a nucleation-promoting factor (NPF) at the surface of endosomes, where it recruits and activates the Arp2/3 complex to induce actin polymerization, playing a key role in the fission of tubules that serve as transport intermediates during endosome sorting. Involved in endocytic trafficking of EGF. Involved in transferrin receptor recycling. Regulates the trafficking of endosomal alpha5beta1 integrin to the plasma membrane and involved in invasive cell migration. In T-cells involved in endosome-to-membrane recycling of receptors including T-cell receptor (TCR), CD28 and ITGAL; proposed to be implicated in T cell proliferation and effector function. In dendritic cells involved in endosome-to-membrane recycling of major histocompatibility complex (MHC) class II probably involving retromer and subsequently allowing antigen sampling, loading and presentation during T-cell activation. Involved in Arp2/3 complex-dependent actin assembly driving Salmonella typhimurium invasion independent of ruffling. Involved in the exocytosis of MMP14 leading to matrix remodeling during invasive migration and implicating late endosome-to-plasma membrane tubular connections and cooperation with the exocyst complex. Involved in negative regulation of autophagy independently from its role in endosomal sorting by inhibiting BECN1 ubiquitination to inactivate PIK3C3/Vps34 activity. The sequence is that of WASH complex subunit 1 from Homo sapiens (Human).